The chain runs to 373 residues: Mannitol-1-phosphate 5-dehydrogenase (373 aa).

Residue 3-14 (ALHFGAGNIGRG) participates in NAD(+) binding.

Belongs to the mannitol dehydrogenase family.

It catalyses the reaction D-mannitol 1-phosphate + NAD(+) = beta-D-fructose 6-phosphate + NADH + H(+). The polypeptide is Mannitol-1-phosphate 5-dehydrogenase (Bacillus pumilus (strain SAFR-032)).